Reading from the N-terminus, the 242-residue chain is Small ribosomal subunit protein uS2 (242 aa).

The protein belongs to the universal ribosomal protein uS2 family.

This is Small ribosomal subunit protein uS2 from Mannheimia succiniciproducens (strain KCTC 0769BP / MBEL55E).